Reading from the N-terminus, the 282-residue chain is Bifunctional protein FolD (282 aa).

NADP(+) is bound by residues 166 to 168 and isoleucine 232; that span reads GAS.

It belongs to the tetrahydrofolate dehydrogenase/cyclohydrolase family. As to quaternary structure, homodimer.

It carries out the reaction (6R)-5,10-methylene-5,6,7,8-tetrahydrofolate + NADP(+) = (6R)-5,10-methenyltetrahydrofolate + NADPH. The enzyme catalyses (6R)-5,10-methenyltetrahydrofolate + H2O = (6R)-10-formyltetrahydrofolate + H(+). It participates in one-carbon metabolism; tetrahydrofolate interconversion. Catalyzes the oxidation of 5,10-methylenetetrahydrofolate to 5,10-methenyltetrahydrofolate and then the hydrolysis of 5,10-methenyltetrahydrofolate to 10-formyltetrahydrofolate. This is Bifunctional protein FolD from Haemophilus influenzae (strain PittEE).